We begin with the raw amino-acid sequence, 165 residues long: Mid1-interacting protein 1-like (165 aa).

Residues 46-67 (DQESHASVSHNNNNNNEPSFPN) are disordered.

It belongs to the SPOT14 family.

Its subcellular location is the nucleus. It is found in the cytoplasm. The protein resides in the cytoskeleton. Its function is as follows. Involved in stabilization of microtubules. May play a role in the regulation of lipogenesis. The chain is Mid1-interacting protein 1-like from Danio rerio (Zebrafish).